Here is a 381-residue protein sequence, read N- to C-terminus: Protein COS6 (381 aa).

Over 1-42 the chain is Cytoplasmic; sequence MKENELKNEKSVDVLSVKQLESQKTVLPQDLFRSSFTWFCYE. The helical transmembrane segment at 43–63 threads the bilayer; sequence IYKSLVFRIWMLLWLPLSVWW. Topologically, residues 64-69 are extracellular; it reads KLSNNW. Residues 70–90 form a helical membrane-spanning segment; it reads IYPLMVSLLVLFWGPVFVLVI. At 91 to 381 the chain is on the cytoplasmic side; it reads FRLSRKRSLS…QLSCSEESLA (291 aa).

It belongs to the DUP/COS family.

It is found in the membrane. The polypeptide is Protein COS6 (COS6) (Saccharomyces cerevisiae (strain ATCC 204508 / S288c) (Baker's yeast)).